Here is a 457-residue protein sequence, read N- to C-terminus: MSPCKLLPFCVALALTGCSLAPDYQRPAMPVPQQFSLSQNGLVNAADNYQNAGWRTFFVDNQVKTLISEALVNNRDLRMATLKVQEARAQYRLTDADRYPQLNGEGSGSWSGNLKGNTATTREFSTGLNASFDLDFFGRLKNMSEAERQNYLATEEAQRAVHILLVSNVAQSYFNQQLAYAQLQIAEETLRNYQQSYAFVEKQLLTGSSNVLALEQARGVIESTRSDIAKRQGELAQANNALQLLLGSYGKLPQAQTVNSDSLQSVKLPAGLSSQILLQRPDIMEAEHALMAANANIGAARAAFFPSISLTSGISTASSDLSSLFNASSGMWNFIPKIEIPIFNAGRNQANLDIAEIRQQQSVVNYEQKIQNAFKEVADALALRQSLNDQISAQQRYLASLQITLQRARALYQHGAVSYLEVLDAERSLFATRQTLLDLNYARQVNEISLYTALGGG.

A signal peptide spans 1 to 17 (MSPCKLLPFCVALALTG). The N-palmitoyl cysteine moiety is linked to residue C18. A lipid anchor (S-diacylglycerol cysteine) is attached at C18.

It belongs to the outer membrane factor (OMF) (TC 1.B.17) family. In terms of assembly, homotrimer. Component of the cus efflux system composed of CusA, CusB, CusC and CusF.

Its subcellular location is the cell outer membrane. In terms of biological role, forms pores that allow passive diffusion of cations across the outer membrane. Part of a cation efflux system that mediates resistance to copper and silver. In pathogenic strains it allows the bacteria to invade brain microvascular endothelial cells (BMEC) thus allowing it to cross the blood-brain barrier and cause neonatal meningitis. The sequence is that of Cation efflux system protein CusC (cusC) from Escherichia coli (strain K12).